Here is a 416-residue protein sequence, read N- to C-terminus: Gamma-glutamyl phosphate reductase (416 aa).

The protein belongs to the gamma-glutamyl phosphate reductase family.

The protein resides in the cytoplasm. The catalysed reaction is L-glutamate 5-semialdehyde + phosphate + NADP(+) = L-glutamyl 5-phosphate + NADPH + H(+). The protein operates within amino-acid biosynthesis; L-proline biosynthesis; L-glutamate 5-semialdehyde from L-glutamate: step 2/2. In terms of biological role, catalyzes the NADPH-dependent reduction of L-glutamate 5-phosphate into L-glutamate 5-semialdehyde and phosphate. The product spontaneously undergoes cyclization to form 1-pyrroline-5-carboxylate. The sequence is that of Gamma-glutamyl phosphate reductase from Streptococcus pyogenes serotype M3 (strain ATCC BAA-595 / MGAS315).